The sequence spans 396 residues: ATP phosphoribosyltransferase regulatory subunit (396 aa).

It belongs to the class-II aminoacyl-tRNA synthetase family. HisZ subfamily. Heteromultimer composed of HisG and HisZ subunits.

It localises to the cytoplasm. The protein operates within amino-acid biosynthesis; L-histidine biosynthesis; L-histidine from 5-phospho-alpha-D-ribose 1-diphosphate: step 1/9. Its function is as follows. Required for the first step of histidine biosynthesis. May allow the feedback regulation of ATP phosphoribosyltransferase activity by histidine. The polypeptide is ATP phosphoribosyltransferase regulatory subunit (Cellvibrio japonicus (strain Ueda107) (Pseudomonas fluorescens subsp. cellulosa)).